A 181-amino-acid chain; its full sequence is Adenylate kinase (181 aa).

Residue 10 to 15 (GAGKGT) coordinates ATP. Positions 30–59 (STGDLFRANIGEGTPLGLEAKSYIDAGKLV) are NMP. AMP is bound by residues threonine 31, arginine 36, 57–59 (KLV), 85–88 (GFPR), and glutamine 92. Positions 126-132 (ARGRADD) are LID. Arginine 127 serves as a coordination point for ATP. AMP is bound by residues arginine 129 and arginine 140. An ATP-binding site is contributed by glycine 166.

Belongs to the adenylate kinase family. In terms of assembly, monomer.

Its subcellular location is the cytoplasm. It catalyses the reaction AMP + ATP = 2 ADP. The protein operates within purine metabolism; AMP biosynthesis via salvage pathway; AMP from ADP: step 1/1. Its function is as follows. Catalyzes the reversible transfer of the terminal phosphate group between ATP and AMP. Plays an important role in cellular energy homeostasis and in adenine nucleotide metabolism. This chain is Adenylate kinase, found in Corynebacterium aurimucosum (strain ATCC 700975 / DSM 44827 / CIP 107346 / CN-1) (Corynebacterium nigricans).